The chain runs to 259 residues: Type III pantothenate kinase (259 aa).

6-13 (DCGNTNTV) lines the ATP pocket. Position 107–110 (107–110 (GPDR)) interacts with substrate. Asp-109 serves as the catalytic Proton acceptor. K(+) is bound at residue Asp-129. Residue Thr-132 coordinates ATP. Thr-184 is a substrate binding site.

The protein belongs to the type III pantothenate kinase family. Homodimer. The cofactor is NH4(+). K(+) is required as a cofactor.

The protein localises to the cytoplasm. The catalysed reaction is (R)-pantothenate + ATP = (R)-4'-phosphopantothenate + ADP + H(+). It functions in the pathway cofactor biosynthesis; coenzyme A biosynthesis; CoA from (R)-pantothenate: step 1/5. Its function is as follows. Catalyzes the phosphorylation of pantothenate (Pan), the first step in CoA biosynthesis. The protein is Type III pantothenate kinase of Jannaschia sp. (strain CCS1).